The sequence spans 551 residues: Cation/acetate symporter ActP (551 aa).

14 helical membrane-spanning segments follow: residues H5–G25, I34–A54, G77–V97, G104–E124, L150–A170, V184–A204, W207–V227, I263–L283, G304–V324, F356–L376, V406–E426, I430–I450, L469–L489, and Y498–I518.

It belongs to the sodium:solute symporter (SSF) (TC 2.A.21) family.

The protein resides in the cell inner membrane. Transports acetate. This Yersinia pseudotuberculosis serotype IB (strain PB1/+) protein is Cation/acetate symporter ActP.